Here is a 389-residue protein sequence, read N- to C-terminus: Type II methyltransferase M2.BsuMI (389 aa).

The SAM-dependent MTase C5-type domain occupies 1–299 (MKVVSLFSGI…ENLSQPKGSI (299 aa)). Residue cysteine 69 is part of the active site.

This sequence belongs to the class I-like SAM-binding methyltransferase superfamily. C5-methyltransferase family. In terms of assembly, monomer. May form a complex with YdiP, also seems to be active alone.

It carries out the reaction a 2'-deoxycytidine in DNA + S-adenosyl-L-methionine = a 5-methyl-2'-deoxycytidine in DNA + S-adenosyl-L-homocysteine + H(+). Somewhat inhibited by MgCl(2) and spermidine, strongly inhibited by MnCl(2). In terms of biological role, a methylase, recognizes the double-stranded sequence 5'-YTCGAR-3', methylates C-3 on both strands, and protects the DNA from cleavage by the BsuMI endonuclease. This Bacillus subtilis (strain 168) protein is Type II methyltransferase M2.BsuMI (ydiP).